Reading from the N-terminus, the 460-residue chain is NADH-ubiquinone oxidoreductase chain 4 (460 aa).

The next 13 membrane-spanning stretches (helical) occupy residues 22–42, 59–79, 93–113, 114–134, 148–168, 195–215, 225–245, 258–278, 286–306, 310–330, 351–371, 394–414, and 440–460; these read WLWP…LLWF, IDPL…LMIL, QRIY…AFSA, TELI…LIII, TYFL…LLLM, FWWT…GVHL, PIAG…YGMM, MAYP…SICL, LIAY…MIQT, FAGA…LFCL, VMLP…LALP, ILLT…MFLM, and LHLI…GWTF.

The protein belongs to the complex I subunit 4 family.

The protein localises to the mitochondrion membrane. The catalysed reaction is a ubiquinone + NADH + 5 H(+)(in) = a ubiquinol + NAD(+) + 4 H(+)(out). Its function is as follows. Core subunit of the mitochondrial membrane respiratory chain NADH dehydrogenase (Complex I) that is believed to belong to the minimal assembly required for catalysis. Complex I functions in the transfer of electrons from NADH to the respiratory chain. The immediate electron acceptor for the enzyme is believed to be ubiquinone. The protein is NADH-ubiquinone oxidoreductase chain 4 (MT-ND4) of Squalus acanthias (Spiny dogfish).